Consider the following 180-residue polypeptide: Cell division protein ZapC (180 aa).

This sequence belongs to the ZapC family. In terms of assembly, interacts directly with FtsZ.

The protein localises to the cytoplasm. Functionally, contributes to the efficiency of the cell division process by stabilizing the polymeric form of the cell division protein FtsZ. Acts by promoting interactions between FtsZ protofilaments and suppressing the GTPase activity of FtsZ. The protein is Cell division protein ZapC of Vibrio vulnificus (strain CMCP6).